The sequence spans 1488 residues: Eukaryotic translation initiation factor 4G (1488 aa).

Disordered stretches follow at residues 196–320 (VQHR…GQTS), 337–367 (DSEKVDLTSKVSGLTSATSESSISPILGKSE), and 415–707 (THQI…MTEA). Basic and acidic residues-rich tracts occupy residues 216 to 244 (VSEKESKAPSIPEKHSKESKAPSAVEKHP) and 274 to 299 (ADEKKESLPMTDSLKDNKKNATRNDT). Composition is skewed to polar residues over residues 300 to 310 (KNLPQQPQSAS), 345 to 360 (SKVSGLTSATSESSIS), 448 to 464 (SLATSKPGNSDATSFVT), and 473 to 495 (CTTSVPEDHSLMNTSHNKDTQTL). Over residues 496–520 (SASVDASDVSEVNSGTSSESTSQST) the composition is skewed to low complexity. Basic and acidic residues predominate over residues 555 to 566 (QVKHADGAKDES). A compositionally biased stretch (polar residues) spans 627-646 (QEQSESVATSDGADSSSTVD). The segment covering 651-671 (LPEESEREVMCEDDGKKKVEP) has biased composition (basic and acidic residues). Residues 683-696 (PKLQSSDSGNQASA) are compositionally biased toward polar residues. The tract at residues 709–721 (GRKKYSRDFLLTF) is EIF4E-binding. Over residues 753–784 (DREPHPSSARGSDRPTSRGDRRGPAMDDDKWL) the composition is skewed to basic and acidic residues. Disordered regions lie at residues 753-795 (DREP…PNRD), 974-1000 (RGEREEAEADKTEEEGEIKQTKEEREE), and 1107-1299 (WQQR…SEEE). The MIF4G domain occupies 883-1106 (QRQLKAILNK…RDSIDLRKNK (224 aa)). The segment covering 978 to 989 (EEAEADKTEEEG) has biased composition (acidic residues). 4 stretches are compositionally biased toward basic and acidic residues: residues 990–1000 (EIKQTKEEREE), 1111–1132 (RKVDGPKKIDEVHRDAAQERHA), 1181–1191 (IRYEQERHQFD), and 1254–1267 (TREDTSSRIPDRFS). A compositionally biased stretch (polar residues) spans 1273-1294 (AAQSASSSHRPASQEGRSGNKS). The MI domain maps to 1299-1423 (ELREKSIATI…VLQDVGKLIE (125 aa)).

Belongs to the eukaryotic initiation factor 4G family. In terms of assembly, EIF4F is a multi-subunit complex, the composition of which varies with external and internal environmental conditions. It is composed of at least EIF4A, EIF4E and EIF4G. In higher plants two isoforms of EIF4F have been identified, named isoform EIF4F and isoform EIF(iso)4F. Isoform EIF4F has subunits p220 and p26, whereas isoform EIF(iso)4F has subunits p82 and p28.

Component of the protein complex eIF4F, which is involved in the recognition of the mRNA cap, ATP-dependent unwinding of 5'-terminal secondary structure and recruitment of mRNA to the ribosome. The polypeptide is Eukaryotic translation initiation factor 4G (Triticum aestivum (Wheat)).